The chain runs to 1394 residues: DNA-directed RNA polymerase subunit beta'' (1394 aa).

Zn(2+) is bound by residues Cys224, Cys295, Cys302, and Cys305.

This sequence belongs to the RNA polymerase beta' chain family. RpoC2 subfamily. As to quaternary structure, in plastids the minimal PEP RNA polymerase catalytic core is composed of four subunits: alpha, beta, beta', and beta''. When a (nuclear-encoded) sigma factor is associated with the core the holoenzyme is formed, which can initiate transcription. Requires Zn(2+) as cofactor.

The protein resides in the plastid. The protein localises to the chloroplast. The enzyme catalyses RNA(n) + a ribonucleoside 5'-triphosphate = RNA(n+1) + diphosphate. Its function is as follows. DNA-dependent RNA polymerase catalyzes the transcription of DNA into RNA using the four ribonucleoside triphosphates as substrates. The sequence is that of DNA-directed RNA polymerase subunit beta'' from Vitis vinifera (Grape).